The sequence spans 217 residues: ATP phosphoribosyltransferase (217 aa).

Belongs to the ATP phosphoribosyltransferase family. Short subfamily. In terms of assembly, heteromultimer composed of HisG and HisZ subunits.

The protein localises to the cytoplasm. It carries out the reaction 1-(5-phospho-beta-D-ribosyl)-ATP + diphosphate = 5-phospho-alpha-D-ribose 1-diphosphate + ATP. The protein operates within amino-acid biosynthesis; L-histidine biosynthesis; L-histidine from 5-phospho-alpha-D-ribose 1-diphosphate: step 1/9. Functionally, catalyzes the condensation of ATP and 5-phosphoribose 1-diphosphate to form N'-(5'-phosphoribosyl)-ATP (PR-ATP). Has a crucial role in the pathway because the rate of histidine biosynthesis seems to be controlled primarily by regulation of HisG enzymatic activity. The protein is ATP phosphoribosyltransferase of Synechococcus sp. (strain WH7803).